Consider the following 204-residue polypeptide: GTP cyclohydrolase 1 (204 aa).

The Zn(2+) site is built by C93, H96, and C164.

Belongs to the GTP cyclohydrolase I family. Toroid-shaped homodecamer, composed of two pentamers of five dimers.

It carries out the reaction GTP + H2O = 7,8-dihydroneopterin 3'-triphosphate + formate + H(+). The protein operates within cofactor biosynthesis; 7,8-dihydroneopterin triphosphate biosynthesis; 7,8-dihydroneopterin triphosphate from GTP: step 1/1. This is GTP cyclohydrolase 1 from Rhizobium meliloti (strain 1021) (Ensifer meliloti).